A 78-amino-acid polypeptide reads, in one-letter code: Large ribosomal subunit protein bL28 (78 aa).

It belongs to the bacterial ribosomal protein bL28 family.

The chain is Large ribosomal subunit protein bL28 from Bordetella avium (strain 197N).